The primary structure comprises 374 residues: Mitochondrial import inner membrane translocase subunit tim50 (374 aa).

A mitochondrion-targeting transit peptide spans 1 to 48 (MILNKVAKCYGKQIGFFGNKTTQFIKPNQTIFLIGGTKRLFTTQQQQS). The interval 42 to 97 (TTQQQQSPKKEEPKSEQQKKVEDKTEEKEKEKDEEENENEKEKENEDGEGQKKKSK) is disordered. Basic and acidic residues-rich tracts occupy residues 49 to 72 (PKKE…KEKE) and 81 to 93 (EKEK…EGQK). Residues 103–125 (IVTSVTSTFFAGVLVASTFGYLT) form a helical membrane-spanning segment. The 142-residue stretch at 191–332 (PGGKKYTLVI…IELLPVLESF (142 aa)) folds into the FCP1 homology domain.

This sequence belongs to the TIM50 family. In terms of assembly, component of the mitochondrial import inner membrane translocase complex.

It is found in the mitochondrion inner membrane. Its function is as follows. Component of the mitochondrial import inner membrane translocase that mediates the translocation of transit peptide-containing proteins across the mitochondrial inner membrane. The sequence is that of Mitochondrial import inner membrane translocase subunit tim50 (timm50) from Dictyostelium discoideum (Social amoeba).